The chain runs to 157 residues: Crossover junction endodeoxyribonuclease RuvC (157 aa).

Catalysis depends on residues Asp-7, Glu-66, and Asp-139. Mg(2+) contacts are provided by Asp-7, Glu-66, and Asp-139.

The protein belongs to the RuvC family. Homodimer which binds Holliday junction (HJ) DNA. The HJ becomes 2-fold symmetrical on binding to RuvC with unstacked arms; it has a different conformation from HJ DNA in complex with RuvA. In the full resolvosome a probable DNA-RuvA(4)-RuvB(12)-RuvC(2) complex forms which resolves the HJ. Requires Mg(2+) as cofactor.

It is found in the cytoplasm. The catalysed reaction is Endonucleolytic cleavage at a junction such as a reciprocal single-stranded crossover between two homologous DNA duplexes (Holliday junction).. Its function is as follows. The RuvA-RuvB-RuvC complex processes Holliday junction (HJ) DNA during genetic recombination and DNA repair. Endonuclease that resolves HJ intermediates. Cleaves cruciform DNA by making single-stranded nicks across the HJ at symmetrical positions within the homologous arms, yielding a 5'-phosphate and a 3'-hydroxyl group; requires a central core of homology in the junction. The consensus cleavage sequence is 5'-(A/T)TT(C/G)-3'. Cleavage occurs on the 3'-side of the TT dinucleotide at the point of strand exchange. HJ branch migration catalyzed by RuvA-RuvB allows RuvC to scan DNA until it finds its consensus sequence, where it cleaves and resolves the cruciform DNA. This is Crossover junction endodeoxyribonuclease RuvC from Campylobacter concisus (strain 13826).